The sequence spans 1123 residues: Adenylyl cyclase X E (1123 aa).

Residues M1 to Y47 are Cytoplasmic-facing. A helical transmembrane segment spans residues L48–A68. Residues T69 to R73 lie on the Extracellular side of the membrane. Residues S74 to L94 traverse the membrane as a helical segment. Residues S95–H106 are Cytoplasmic-facing. A helical transmembrane segment spans residues T107–T127. At E128 to S137 the chain is on the extracellular side. A helical transmembrane segment spans residues W138–I158. The Cytoplasmic portion of the chain corresponds to H159–G163. The chain crosses the membrane as a helical span at residues A164 to A184. Residues Q185–S196 are Extracellular-facing. A helical transmembrane segment spans residues V197–Y217. At R218 to K581 the chain is on the cytoplasmic side. Residues L346–D348 and R392 contribute to the ATP site. Mg(2+) is bound at residue D348. The chain crosses the membrane as a helical span at residues Y582–T602. Residues Q603–S608 are Extracellular-facing. Residues C609–Y629 traverse the membrane as a helical segment. The Cytoplasmic portion of the chain corresponds to K630 to R667. A helical membrane pass occupies residues I668 to S688. The Extracellular portion of the chain corresponds to C689–T719. Residues T720 to V740 traverse the membrane as a helical segment. Over K741–A743 the chain is Cytoplasmic. A helical membrane pass occupies residues V744–F764. Residues H765–P772 are Extracellular-facing. The helical transmembrane segment at Y773–V793 threads the bilayer. At K794–L1123 the chain is on the cytoplasmic side. Residues K903, D1014–W1016, N1021–R1025, and K1061 each bind ATP.

Belongs to the adenylyl cyclase class-4/guanylyl cyclase family. In terms of tissue distribution, expressed in labella.

The protein localises to the membrane. The enzyme catalyses ATP = 3',5'-cyclic AMP + diphosphate. In terms of biological role, catalyzes the formation of the signaling molecule cAMP in response to G-protein signaling. The polypeptide is Adenylyl cyclase X E (Drosophila melanogaster (Fruit fly)).